The following is a 157-amino-acid chain: Small ribosomal subunit protein uS7 (157 aa).

Belongs to the universal ribosomal protein uS7 family. Part of the 30S ribosomal subunit. Contacts proteins S9 and S11.

Its function is as follows. One of the primary rRNA binding proteins, it binds directly to 16S rRNA where it nucleates assembly of the head domain of the 30S subunit. Is located at the subunit interface close to the decoding center, probably blocks exit of the E-site tRNA. The sequence is that of Small ribosomal subunit protein uS7 from Pseudomonas fluorescens (strain Pf0-1).